Here is a 305-residue protein sequence, read N- to C-terminus: Glycine--tRNA ligase alpha subunit (305 aa).

This sequence belongs to the class-II aminoacyl-tRNA synthetase family. Tetramer of two alpha and two beta subunits.

It localises to the cytoplasm. It carries out the reaction tRNA(Gly) + glycine + ATP = glycyl-tRNA(Gly) + AMP + diphosphate. This chain is Glycine--tRNA ligase alpha subunit, found in Streptococcus pneumoniae serotype 4 (strain ATCC BAA-334 / TIGR4).